Consider the following 365-residue polypeptide: Glucan endo-1,3-beta-glucosidase, basic vacuolar isoform (365 aa).

An N-terminal signal peptide occupies residues 1 to 32; sequence MSTLHKHNTPQMAAITLLGLLLVASSIEIAGA. The active-site Proton donor is E128. E273 (nucleophile) is an active-site residue. Residues 349–365 constitute a propeptide, removed in mature form; sequence VSGSVETNATASLISEI. N356 carries an N-linked (GlcNAc...) asparagine glycan.

This sequence belongs to the glycosyl hydrolase 17 family.

It is found in the vacuole. It catalyses the reaction Hydrolysis of (1-&gt;3)-beta-D-glucosidic linkages in (1-&gt;3)-beta-D-glucans.. Functionally, implicated in the defense of plants against pathogens. In Nicotiana plumbaginifolia (Leadwort-leaved tobacco), this protein is Glucan endo-1,3-beta-glucosidase, basic vacuolar isoform (GN2).